Consider the following 454-residue polypeptide: Innexin-19 (454 aa).

Residues 1 to 48 lie on the Cytoplasmic side of the membrane; that stretch reads MWRTPASTGPLRQDRQMFFHATLARSFINALSVRGDDDAVDRLNYYYT. Residues 49–69 form a helical membrane-spanning segment; it reads PLILAVCCLVISAKQYGGTPI. Topologically, residues 70–118 are extracellular; that stretch reads ECWVNPHSRESMEEYIESYCWIQNTYWIPMYENVPDDHTAREEKQIGYY. The helical transmembrane segment at 119-139 threads the bilayer; it reads QWVPFILIAEALMFSLPCIFW. Topologically, residues 140–214 are cytoplasmic; it reads RLCSFQSGLN…SRFLSGQCLS (75 aa). A helical membrane pass occupies residues 215 to 235; that stretch reads ILHSFTKLLYSMNVVAQFLIL. Residues 236–300 lie on the Extracellular side of the membrane; that stretch reads NACLKSSDFL…ALLINIINEK (65 aa). A helical transmembrane segment spans residues 301 to 321; it reads VFAFLWCWYMILAIITTCSFI. Over 322–454 the chain is Cytoplasmic; that stretch reads YWIANSFIHS…SNPGQTKSFL (133 aa).

The protein belongs to the pannexin family. As to expression, specifically expressed in sensory neurons and interneurons in the head and tail. Expressed in neurons AWC, ASH, AFD, ASI, ADL, ASK, BAG, AWB, and ADF (head sensory neurons); ADA, AIZ, RIC, AIY, and AIM (head interneurons); PHA and PHB (tail sensory neurons); and PVC and PVQ (tail interneurons).

It localises to the cell membrane. The protein localises to the cell junction. It is found in the gap junction. Functionally, structural component of the gap junctions that specifically coordinates left-right asymmetry in the developing nervous system. Acts by forming gap junction network linking embryonic neurons and providing electrical coupling between cells, leading to promote or inhibit AWC signaling. Required for the left and right AWC olfactory neurons to establish asymmetric patterns of gene expression during embryogenesis. Acts autonomously. This is Innexin-19 (inx-19) from Caenorhabditis elegans.